The sequence spans 398 residues: Serine/threonine-protein phosphatase 2A activator (398 aa).

ATP contacts are provided by Arg-137, Thr-142, and Gly-143. Gly-197 and Asp-203 together coordinate Mg(2+). Residues Pro-293, Gln-296, and His-297 each contribute to the ATP site. Residues 343–352 are compositionally biased toward pro residues; the sequence is PVATAPPPPA. Residues 343–398 are disordered; the sequence is PVATAPPPPAESLSIEQNVGDSSSESSDNSVVLRPSTSSSSLVAAAEGSGDKPSKE. Low complexity predominate over residues 363 to 388; that stretch reads DSSSESSDNSVVLRPSTSSSSLVAAA.

It belongs to the PTPA-type PPIase family. Associates with PP2A heterodimeric core enzyme PP2A(D), composed of a catalytic subunit (subunit C) and a constant regulatory subunit (PR65 or subunit A). Interacts with the catalytic subunit Pp4-19C of the serine/threonine-protein phosphatase 4 (PP4) complex; thereby mediating basal localization of the Miranda (Mira) complex; probably by facilitating the dephosphorylation of Mira.

It localises to the cytoplasm. Its subcellular location is the nucleus. It catalyses the reaction [protein]-peptidylproline (omega=180) = [protein]-peptidylproline (omega=0). Its function is as follows. PPIases accelerate the folding of proteins. It catalyzes the cis-trans isomerization of proline imidic peptide bonds in oligopeptides. Acts as a regulatory subunit for serine/threonine-protein phosphatase 2A (PP2A). Modulates PP2A activity or substrate specificity, probably by inducing a conformational change in the catalytic subunit, a proposed direct target of the PPIase. Acts as mediator for the basal localization of the Miranda (Mira) complex during mitosis of larval neuroblast asymmetric division. Associates with the phosphatase 4 (PP4) complex to mediate basal localization of Mira; probably by facilitating the dephosphorylation of Mira. Cortical association of Mira mediated by the PTPA-PP4 complex seems to be independent of aPKC activity. This is Serine/threonine-protein phosphatase 2A activator from Drosophila melanogaster (Fruit fly).